The chain runs to 494 residues: Aspartyl/glutamyl-tRNA(Asn/Gln) amidotransferase subunit B (494 aa).

This sequence belongs to the GatB/GatE family. GatB subfamily. Heterotrimer of A, B and C subunits.

It catalyses the reaction L-glutamyl-tRNA(Gln) + L-glutamine + ATP + H2O = L-glutaminyl-tRNA(Gln) + L-glutamate + ADP + phosphate + H(+). The catalysed reaction is L-aspartyl-tRNA(Asn) + L-glutamine + ATP + H2O = L-asparaginyl-tRNA(Asn) + L-glutamate + ADP + phosphate + 2 H(+). Functionally, allows the formation of correctly charged Asn-tRNA(Asn) or Gln-tRNA(Gln) through the transamidation of misacylated Asp-tRNA(Asn) or Glu-tRNA(Gln) in organisms which lack either or both of asparaginyl-tRNA or glutaminyl-tRNA synthetases. The reaction takes place in the presence of glutamine and ATP through an activated phospho-Asp-tRNA(Asn) or phospho-Glu-tRNA(Gln). In Synechococcus elongatus (strain ATCC 33912 / PCC 7942 / FACHB-805) (Anacystis nidulans R2), this protein is Aspartyl/glutamyl-tRNA(Asn/Gln) amidotransferase subunit B.